Reading from the N-terminus, the 1499-residue chain is Rho GTPase-activating protein 35 (1499 aa).

Residues 1-266 form a has GTPase activity, required for proper localization region; the sequence is MMMARKQDVR…IPYFEALKQQ (266 aa). GTP contacts are provided by residues lysine 28, 33–37, leucine 52, serine 56, 95–97, 201–203, and 229–231; these read IGKSC, EQT, KCD, and SAR. FF domains are found at residues 270–327, 368–422, 429–483, and 485–550; these read IATA…HIHR, KLLE…HLEK, RAEM…HQKQ, and IDRA…HIHF. Tyrosine 308 carries the post-translational modification Phosphotyrosine. A Phosphoserine modification is found at serine 589. The 176-residue stretch at 592–767 folds into the pG1 pseudoGTPase domain; the sequence is DLNIDRINLV…LLDSKRNLNL (176 aa). Phosphoserine occurs at positions 770 and 773. The pG2 pseudoGTPase domain maps to 783-947; sequence RIVMCLMCGD…FKDVVEKKNI (165 aa). Residues serine 970, serine 975, serine 985, and serine 1072 each carry the phosphoserine modification. Tyrosine 1087 bears the Phosphotyrosine mark. The residue at position 1105 (tyrosine 1105) is a Phosphotyrosine; by ABL2 and PTK6. Positions 1124–1141 are enriched in polar residues; that stretch reads KAQSNGSGNGSDSEMDTS. Residues 1124-1148 form a disordered region; sequence KAQSNGSGNGSDSEMDTSSLERGRK. Serine 1134, serine 1142, serine 1150, serine 1176, serine 1179, and serine 1221 each carry phosphoserine. The tract at residues 1177 to 1207 is disordered; it reads VGSDDELGPIRKKEEDQASQGYKGDNAVIPY. Residues 1213–1236 are required for phospholipid binding and regulation of the substrate preference; the sequence is PRRRNILRSLRRNTKKPKPKPRPS. Phosphothreonine is present on threonine 1226. Position 1236 is a phosphoserine (serine 1236). The Rho-GAP domain occupies 1249-1436; sequence VPLTTVVTPE…LFIQQCPFFF (188 aa). Positions 1446–1499 are disordered; sequence GAAPGSPSAMAPTVPFLTSTPATSQPSPPQSPPPTPQSPMQPLLSSQLQAEHTL. Low complexity predominate over residues 1448-1470; that stretch reads APGSPSAMAPTVPFLTSTPATSQ. The segment covering 1471 to 1484 has biased composition (pro residues); sequence PSPPQSPPPTPQSP. Residues serine 1472 and serine 1476 each carry the phosphoserine modification. Position 1480 is a phosphothreonine (threonine 1480). Phosphoserine is present on serine 1483. Low complexity predominate over residues 1485-1499; sequence MQPLLSSQLQAEHTL.

Interacts with the general transcription factor GTF2I, the interaction sequesters GTF2I in the cytoplasm. Interacts with RASA1. Post-translationally, phosphorylation of Tyr-1105 by PTK6 promotes the association with RASA1, inactivating RHOA while activating RAS. Phosphorylation at Tyr-308 by PDGFRA inhibits binding to GTF2I. Phosphorylated by PRKCA at Ser-1221 and Thr-1226, induces relocalization from the cytoplasm to regions of plasma membrane ruffling and prevents the binding and substrate specificity regulation by phospholipids. In brain, phosphorylated by FYN and SRC. During focal adhesion formation, phosphorylated by MAPK1 and MAPK3 at the C-terminal region, probably at Ser-1451, Ser-1476, Thr-1480 and Ser-1483. Phosphorylation by MAPK1 and MAPK3 inhibits GAP function and localizes ARGHAP35 away from newly forming focal adhesions and stress fibers in cells spreading on fibronectin. Phosphorylation at Ser-1476 and Thr-1480 by GSK3B requires priming by MAPK and inhibits RhoGAP activity and modulates polarized cell migration. Expressed in the developing kidneys. Expressed in all regions of the mature nervous system (at protein level). Detected in neutrophils (at protein level).

Its subcellular location is the cytoplasm. It localises to the cytoskeleton. The protein localises to the cilium basal body. The protein resides in the nucleus. It is found in the cell membrane. Functionally, rho GTPase-activating protein (GAP). Binds several acidic phospholipids which inhibits the Rho GAP activity to promote the Rac GAP activity. This binding is inhibited by phosphorylation by PRKCA. Involved in cell differentiation as well as cell adhesion and migration, plays an important role in retinal tissue morphogenesis, neural tube fusion, midline fusion of the cerebral hemispheres and mammary gland branching morphogenesis. Transduces signals from p21-ras to the nucleus, acting via the ras GTPase-activating protein (GAP). Transduces SRC-dependent signals from cell-surface adhesion molecules, such as laminin, to promote neurite outgrowth. Regulates axon outgrowth, guidance and fasciculation. Modulates Rho GTPase-dependent F-actin polymerization, organization and assembly, is involved in polarized cell migration and in the positive regulation of ciliogenesis and cilia elongation. During mammary gland development, is required in both the epithelial and stromal compartments for ductal outgrowth. Represses transcription of the glucocorticoid receptor by binding to the cis-acting regulatory sequence 5'-GAGAAAAGAAACTGGAGAAACTC-3'; this function is however unclear and would need additional experimental evidences. The sequence is that of Rho GTPase-activating protein 35 from Mus musculus (Mouse).